We begin with the raw amino-acid sequence, 463 residues long: UDP-N-acetylmuramoylalanine--D-glutamate ligase (463 aa).

Residue 109 to 115 (GTDGKST) participates in ATP binding.

Belongs to the MurCDEF family.

It localises to the cytoplasm. It catalyses the reaction UDP-N-acetyl-alpha-D-muramoyl-L-alanine + D-glutamate + ATP = UDP-N-acetyl-alpha-D-muramoyl-L-alanyl-D-glutamate + ADP + phosphate + H(+). Its pathway is cell wall biogenesis; peptidoglycan biosynthesis. Cell wall formation. Catalyzes the addition of glutamate to the nucleotide precursor UDP-N-acetylmuramoyl-L-alanine (UMA). In Leptospira interrogans serogroup Icterohaemorrhagiae serovar copenhageni (strain Fiocruz L1-130), this protein is UDP-N-acetylmuramoylalanine--D-glutamate ligase.